A 705-amino-acid chain; its full sequence is Solute carrier family 28 member 3 (705 aa).

Residues 1–21 show a composition bias toward basic and acidic residues; sequence MSRSDPDPGKNSEPSKSKMSL. The tract at residues 1–96 is disordered; the sequence is MSRSDPDPGK…TEEESEDERQ (96 aa). Topologically, residues 1-119 are cytoplasmic; the sequence is MSRSDPDPGK…FCRKHRVILQ (119 aa). Residues 48–63 show a composition bias toward polar residues; it reads APGNSTVRSRVVQSGE. Residues 65 to 74 show a composition bias toward basic and acidic residues; that stretch reads GRAKQDDRQI. A helical transmembrane segment spans residues 120–140; it reads HTIWAVLLTGFLALVIAACAL. Residues 141 to 145 lie on the Extracellular side of the membrane; it reads NFHRA. Residues 146 to 166 form a helical membrane-spanning segment; that stretch reads LPLFVITLVTIFFVVWDRLMA. At 167 to 190 the chain is on the cytoplasmic side; it reads KYEQRIDDVLSPGKRLLERHWFWL. Residues 191–211 traverse the membrane as a helical segment; it reads KWVVWCSLILAVILWLALDTA. Over 212–214 the chain is Extracellular; that stretch reads RLG. A helical transmembrane segment spans residues 215-236; sequence QQQLISFGGLVMYIVLLFLFSK. Topologically, residues 237–244 are cytoplasmic; it reads HPTRVYWR. A helical transmembrane segment spans residues 245–264; that stretch reads PVFWGIGLQFLLGLLILRTR. The Extracellular portion of the chain corresponds to 265–301; the sequence is PGFVAFDWMGKQVQTFLGYTDAGAQFVFGEKYTDHFF. A helical transmembrane segment spans residues 302 to 322; it reads AFKILPIVVFFSTVMSMLYYL. Residues 323 to 346 lie on the Cytoplasmic side of the membrane; it reads GLMQWIIRKVGWLMLVTMGSSPIE. The segment at residues 347–365 is an intramembrane region (helical); sequence SVVAAGNIFVGQTESPLLV. Residues 366–378 are Cytoplasmic-facing; it reads QPYLPHVTKSELH. The chain crosses the membrane as a helical span at residues 379-401; that stretch reads TIMTAGFATIAGSVLGAYISFGV. Topologically, residues 402–403 are extracellular; sequence SS. The chain crosses the membrane as a helical span at residues 404-425; it reads THLLTASVMSAPAALAVAKLFW. At 426–460 the chain is on the cytoplasmic side; that stretch reads PETEKPKITLKNAMKMENGDSRNLLEAATQGASSS. Residues 461-486 form a helical membrane-spanning segment; sequence IPLVANIAANLIAFLALLSFVNSALS. Residues 487–524 are Extracellular-facing; it reads WFGSMFDYPQLSFELICSYIFMPFSFMMGVDWQDRFMV. Positions 525-544 form an intramembrane region, helical; it reads AKLIGYKTFFNEFVAYEHLS. At 545-583 the chain is on the extracellular side; that stretch reads KFINLRKAAGPKFVNGVQQYMSIRSETIATYALCGFANF. A helical transmembrane segment spans residues 584–594; sequence GSLGIVIGGLT. Residues 595-607 lie on the Cytoplasmic side of the membrane; the sequence is SIAPSRKRDIASG. The helical transmembrane segment at 608-630 threads the bilayer; it reads AMRALIAGTIACFMTACIAGMLS. The Extracellular segment spans residues 631 to 705; that stretch reads DTPVAINCHH…LNCGWIPNIP (75 aa).

Belongs to the concentrative nucleoside transporter (CNT) (TC 2.A.41) family. In terms of assembly, homotrimer. In terms of tissue distribution, expressed in kidney; in the proximal tubule, glomerulus and cortical collecting duct.

The protein resides in the cell membrane. The catalysed reaction is thymidine(out) + 2 Na(+)(out) = thymidine(in) + 2 Na(+)(in). The enzyme catalyses cytidine(out) + 2 Na(+)(out) = cytidine(in) + 2 Na(+)(in). It carries out the reaction uridine(out) + 2 Na(+)(out) = uridine(in) + 2 Na(+)(in). It catalyses the reaction adenosine(out) + 2 Na(+)(out) = adenosine(in) + 2 Na(+)(in). The catalysed reaction is guanosine(out) + 2 Na(+)(out) = guanosine(in) + 2 Na(+)(in). The enzyme catalyses inosine(out) + 2 Na(+)(out) = inosine(in) + 2 Na(+)(in). In terms of biological role, sodium-dependent, pyrimidine- and purine-selective. Involved in the homeostasis of endogenous nucleosides. Exhibits the transport characteristics of the nucleoside transport system cib or N3 subtype (N3/cib) (with marked transport of both thymidine and inosine). Employs a 2:1 sodium/nucleoside ratio. Also able to transport gemcitabine, 3'-azido-3'-deoxythymidine (AZT), ribavirin and 3-deazauridine. The polypeptide is Solute carrier family 28 member 3 (Slc28a3) (Rattus norvegicus (Rat)).